Consider the following 369-residue polypeptide: Aminomethyltransferase (369 aa).

The protein belongs to the GcvT family. In terms of assembly, the glycine cleavage system is composed of four proteins: P, T, L and H.

It carries out the reaction N(6)-[(R)-S(8)-aminomethyldihydrolipoyl]-L-lysyl-[protein] + (6S)-5,6,7,8-tetrahydrofolate = N(6)-[(R)-dihydrolipoyl]-L-lysyl-[protein] + (6R)-5,10-methylene-5,6,7,8-tetrahydrofolate + NH4(+). In terms of biological role, the glycine cleavage system catalyzes the degradation of glycine. The chain is Aminomethyltransferase from Xanthomonas oryzae pv. oryzae (strain MAFF 311018).